The following is a 475-amino-acid chain: Ribulose bisphosphate carboxylase large chain (475 aa).

Residues 1 to 2 (MS) constitute a propeptide that is removed on maturation. An N-acetylproline modification is found at Pro3. N6,N6,N6-trimethyllysine is present on Lys14. Residues Asn123 and Thr173 each contribute to the substrate site. Lys175 functions as the Proton acceptor in the catalytic mechanism. Lys177 contributes to the substrate binding site. 3 residues coordinate Mg(2+): Lys201, Asp203, and Glu204. Lys201 carries the N6-carboxylysine modification. His294 functions as the Proton acceptor in the catalytic mechanism. Substrate-binding residues include Arg295, His327, and Ser379.

Belongs to the RuBisCO large chain family. Type I subfamily. In terms of assembly, heterohexadecamer of 8 large chains and 8 small chains; disulfide-linked. The disulfide link is formed within the large subunit homodimers. Mg(2+) is required as a cofactor. In terms of processing, the disulfide bond which can form in the large chain dimeric partners within the hexadecamer appears to be associated with oxidative stress and protein turnover.

The protein resides in the plastid. Its subcellular location is the chloroplast. It carries out the reaction 2 (2R)-3-phosphoglycerate + 2 H(+) = D-ribulose 1,5-bisphosphate + CO2 + H2O. The enzyme catalyses D-ribulose 1,5-bisphosphate + O2 = 2-phosphoglycolate + (2R)-3-phosphoglycerate + 2 H(+). In terms of biological role, ruBisCO catalyzes two reactions: the carboxylation of D-ribulose 1,5-bisphosphate, the primary event in carbon dioxide fixation, as well as the oxidative fragmentation of the pentose substrate in the photorespiration process. Both reactions occur simultaneously and in competition at the same active site. In Gossypium hirsutum (Upland cotton), this protein is Ribulose bisphosphate carboxylase large chain.